The following is a 353-amino-acid chain: UDP-N-acetylglucosamine--N-acetylmuramyl-(pentapeptide) pyrophosphoryl-undecaprenol N-acetylglucosamine transferase (353 aa).

UDP-N-acetyl-alpha-D-glucosamine contacts are provided by residues 11-13 (SAG), Arg164, Ser194, and Gln289.

The protein belongs to the glycosyltransferase 28 family. MurG subfamily.

Its subcellular location is the cell membrane. The catalysed reaction is di-trans,octa-cis-undecaprenyl diphospho-N-acetyl-alpha-D-muramoyl-L-alanyl-D-glutamyl-meso-2,6-diaminopimeloyl-D-alanyl-D-alanine + UDP-N-acetyl-alpha-D-glucosamine = di-trans,octa-cis-undecaprenyl diphospho-[N-acetyl-alpha-D-glucosaminyl-(1-&gt;4)]-N-acetyl-alpha-D-muramoyl-L-alanyl-D-glutamyl-meso-2,6-diaminopimeloyl-D-alanyl-D-alanine + UDP + H(+). Its pathway is cell wall biogenesis; peptidoglycan biosynthesis. Functionally, cell wall formation. Catalyzes the transfer of a GlcNAc subunit on undecaprenyl-pyrophosphoryl-MurNAc-pentapeptide (lipid intermediate I) to form undecaprenyl-pyrophosphoryl-MurNAc-(pentapeptide)GlcNAc (lipid intermediate II). In Clostridium kluyveri (strain ATCC 8527 / DSM 555 / NBRC 12016 / NCIMB 10680 / K1), this protein is UDP-N-acetylglucosamine--N-acetylmuramyl-(pentapeptide) pyrophosphoryl-undecaprenol N-acetylglucosamine transferase.